The sequence spans 434 residues: Tol-Pal system protein TolB (434 aa).

A signal peptide spans 1-21 (MIVRRALALAALALAASPALA). Positions 411–434 (GDRQTPVTSGKTDLAAPAWGPLAP) are disordered.

The protein belongs to the TolB family. As to quaternary structure, the Tol-Pal system is composed of five core proteins: the inner membrane proteins TolA, TolQ and TolR, the periplasmic protein TolB and the outer membrane protein Pal. They form a network linking the inner and outer membranes and the peptidoglycan layer.

It is found in the periplasm. Its function is as follows. Part of the Tol-Pal system, which plays a role in outer membrane invagination during cell division and is important for maintaining outer membrane integrity. The protein is Tol-Pal system protein TolB of Anaeromyxobacter dehalogenans (strain 2CP-C).